A 194-amino-acid polypeptide reads, in one-letter code: Yellow fluorescent protein (194 aa).

Lumazine-binding repeat units follow at residues 1–98 and 99–194; these read MFKG…SGGH and ILSA…NQCW. Residue 179–183 participates in FMN binding; the sequence is KVNVE.

As to quaternary structure, homodimer. FMN is required as a cofactor.

Antenna protein that modulates the color of the bioluminescence emission of the luciferase. In the presence of YFP and only at temperatures below 20 degrees Celsius, luciferase exhibits a bimodal emission spectrum with a new peak at 545 nM (yellow), in addition to the one at 485 nM. This chain is Yellow fluorescent protein (luxY), found in Aliivibrio fischeri (Vibrio fischeri).